Reading from the N-terminus, the 435-residue chain is Evolutionarily conserved signaling intermediate in Toll pathway, mitochondrial (435 aa).

Residues 1–48 constitute a mitochondrion transit peptide; it reads MSWVQVNLLVRSLSRGWGGLCRPALSGTPFAQVSLQALRGLHCSAATH. Residue Lys372 forms a Glycyl lysine isopeptide (Lys-Gly) (interchain with G-Cter in ubiquitin) linkage. A disordered region spans residues 401-435; it reads LTTSRLEGQSPPHSPPKGPEEDDETIQAEQQQGQS.

Belongs to the ECSIT family. In terms of assembly, interacts with MAP3K1, SMAD4 and TRAF6. Interacts with SMAD1 only after BMP4-treatment. Part of the mitochondrial complex I assembly/MCIA complex that comprises at least the core subunits TMEM126B, NDUFAF1, ECSIT and ACAD9 and complement subunits such as COA1 and TMEM186. Interacts with NDUFAF1. Interacts with ACAD9. Interacts with TRIM59. Interacts with TMEM70 and TMEM242. Interacts (when ubiquitinated) with NF-kappa-B subunits RELA and NFKB1. Interacts with RIGI, IFIT1 and MAVS; these interactions promote RLR-mediated type I IFN induction. Interacts with SQSTM1; this interaction inhibits TLR4 signaling via functional regulation of the TRAF6-ECSIT complex. Interacts with cereblon/CRBN; this interaction inhibits the ubiquitination of ECSIT. Post-translationally, ubiquitinated on Lys-372; leading to translocation in the nucleus together with RELA and NFKB1 and expression of NF-kappa-B-dependent genes. Detected in heart, brain, lung, liver, skeletal muscle, kidney and testis. Detected in embryonic mesoderm and epiblast, and in extraembryonic ectoderm.

Its subcellular location is the cytoplasm. It localises to the nucleus. The protein resides in the mitochondrion. Functionally, adapter protein that plays a role in different signaling pathways including TLRs and IL-1 pathways or innate antiviral induction signaling. Plays a role in the activation of NF-kappa-B by forming a signal complex with TRAF6 and TAK1/MAP3K7 to activate TAK1/MAP3K7 leading to activation of IKKs. Once ubiquitinated, interacts with the dissociated RELA and NFKB1 proteins and translocates to the nucleus where it induces NF-kappa-B-dependent gene expression. Plays a role in innate antiviral immune response by bridging the pattern recognition receptors RIGI and MDA5/IFIT1 to the MAVS complex at the mitochondrion. Promotes proteolytic activation of MAP3K1. Involved in the BMP signaling pathway. Required for normal embryonic development. In terms of biological role, as part of the MCIA complex, involved in the assembly of the mitochondrial complex I. In Mus musculus (Mouse), this protein is Evolutionarily conserved signaling intermediate in Toll pathway, mitochondrial.